Here is a 31-residue protein sequence, read N- to C-terminus: Cytochrome b6-f complex subunit 6 (31 aa).

Residues 3 to 23 form a helical membrane-spanning segment; the sequence is ALIGYILLMTLMFSLAAGLYF.

The protein belongs to the PetL family. As to quaternary structure, the 4 large subunits of the cytochrome b6-f complex are cytochrome b6, subunit IV (17 kDa polypeptide, PetD), cytochrome f and the Rieske protein, while the 4 small subunits are PetG, PetL, PetM and PetN. The complex functions as a dimer.

The protein localises to the plastid. It localises to the chloroplast thylakoid membrane. In terms of biological role, component of the cytochrome b6-f complex, which mediates electron transfer between photosystem II (PSII) and photosystem I (PSI), cyclic electron flow around PSI, and state transitions. PetL is important for photoautotrophic growth as well as for electron transfer efficiency and stability of the cytochrome b6-f complex. This chain is Cytochrome b6-f complex subunit 6, found in Emiliania huxleyi (Coccolithophore).